The sequence spans 694 residues: DNA ligase (694 aa).

NAD(+)-binding positions include 41–45 (DAEFD), 91–92 (SL), and Glu-121. The active-site N6-AMP-lysine intermediate is Lys-123. The NAD(+) site is built by Arg-144, Glu-184, Lys-300, and Lys-324. Zn(2+) is bound by residues Cys-418, Cys-421, Cys-437, and Cys-443. Positions 607–694 (SVLPTCEGLT…QGPPVQQVVD (88 aa)) constitute a BRCT domain.

It belongs to the NAD-dependent DNA ligase family. LigA subfamily. Requires Mg(2+) as cofactor. Mn(2+) serves as cofactor.

It carries out the reaction NAD(+) + (deoxyribonucleotide)n-3'-hydroxyl + 5'-phospho-(deoxyribonucleotide)m = (deoxyribonucleotide)n+m + AMP + beta-nicotinamide D-nucleotide.. DNA ligase that catalyzes the formation of phosphodiester linkages between 5'-phosphoryl and 3'-hydroxyl groups in double-stranded DNA using NAD as a coenzyme and as the energy source for the reaction. It is essential for DNA replication and repair of damaged DNA. This chain is DNA ligase, found in Mycobacterium leprae (strain TN).